Reading from the N-terminus, the 121-residue chain is Holin-like protein CidA (121 aa).

A run of 4 helical transmembrane segments spans residues 3 to 23 (WWKLSGQILLLFCFAWTGEWI), 30 to 50 (PVPGSIIGIFLLLISLKFNLV), 58 to 78 (GADFLLKELILFFIPSAVAVI), and 89 to 109 (IDLILIIMISTLCVTLVTGLL).

It belongs to the CidA/LrgA family. CidA subfamily.

It localises to the cell membrane. Its function is as follows. Increases the activity of extracellular murein hydrolases possibly by mediating their export via hole formation. Inhibited by the antiholin-like proteins LrgAB. In an unstressed cell, the LrgAB products probably inhibit the function of the CidA protein. When a cell is stressed by the addition of antibiotics or by other factors in the environment, CidA possibly oligomerizes within the bacterial cell membrane, creating lesions that disrupt the proton motive force, which in turn results in loss of cell viability. These lesions are also hypothesized to regulate the subsequent cell lysis by either allowing the murein hydrolases access to the cell wall substrate and/or regulating their activity by a possible change in the cell wall pH that results from loss of membrane potential. This Bacillus cereus (strain ATCC 10987 / NRS 248) protein is Holin-like protein CidA.